The chain runs to 1438 residues: Pyochelin synthetase PchE (1438 aa).

Positions 6-85 constitute a Carrier 1 domain; sequence DSRTALRDWL…AWLDLLACAD (80 aa). Ser-46 is modified (O-(pantetheine 4'-phosphoryl)serine). The interval 136 to 442 is condensation/cyclization; it reads RTRDVDPQRL…ARRQGQPRSA (307 aa). The tract at residues 563–950 is adenylation; the sequence is RAAEAPDADA…GRVDQQVKVR (388 aa). The Carrier 2 domain occupies 1350-1425; the sequence is EPLEAHEQAL…GLARHLQAQT (76 aa). Ser-1385 carries the post-translational modification O-(pantetheine 4'-phosphoryl)serine.

The protein belongs to the NRP synthetase family. Pantetheine 4'-phosphate serves as cofactor.

It carries out the reaction holo-[peptidyl-carrier protein] + L-cysteine + ATP = L-cysteinyl-[peptidyl-carrier protein] + AMP + diphosphate. It functions in the pathway siderophore biosynthesis. It participates in antifungal biosynthesis. Its function is as follows. Involved in the biosynthesis of the siderophore pyochelin. Accepts salicylate activated by PchD at the first peptidyl carrier domain (ArCP), and activates and fixes one molecule of cysteine at the second peptidyl carrier domain (PCP1) via a thioester linkage to the phosphopanthetheine moiety. Then catalyzes the condensation reaction between the salicylate bound to the first site and the cysteine bound to the second site, and the cyclization of the cysteine to form the salicyl-thiazolinyl-S-PCP1 intermediate at the second site. When this intermediate is released by the action of a thioesterase, it produces the antifungal antibiotic dihydroaeruginoic acid (Dha or hydroxyphenyl-thiazolinyl-carboxylate). The sequence is that of Pyochelin synthetase PchE from Pseudomonas aeruginosa (strain UCBPP-PA14).